The chain runs to 176 residues: ATP synthase subunit b (176 aa).

Residues 18-38 (GVEWGTVIVTVITFAILLALL) traverse the membrane as a helical segment.

Belongs to the ATPase B chain family. In terms of assembly, F-type ATPases have 2 components, F(1) - the catalytic core - and F(0) - the membrane proton channel. F(1) has five subunits: alpha(3), beta(3), gamma(1), delta(1), epsilon(1). F(0) has three main subunits: a(1), b(2) and c(10-14). The alpha and beta chains form an alternating ring which encloses part of the gamma chain. F(1) is attached to F(0) by a central stalk formed by the gamma and epsilon chains, while a peripheral stalk is formed by the delta and b chains.

Its subcellular location is the cell membrane. In terms of biological role, f(1)F(0) ATP synthase produces ATP from ADP in the presence of a proton or sodium gradient. F-type ATPases consist of two structural domains, F(1) containing the extramembraneous catalytic core and F(0) containing the membrane proton channel, linked together by a central stalk and a peripheral stalk. During catalysis, ATP synthesis in the catalytic domain of F(1) is coupled via a rotary mechanism of the central stalk subunits to proton translocation. Component of the F(0) channel, it forms part of the peripheral stalk, linking F(1) to F(0). The polypeptide is ATP synthase subunit b (Staphylococcus haemolyticus (strain JCSC1435)).